The sequence spans 356 residues: Histidinol-phosphate aminotransferase (356 aa).

K214 bears the N6-(pyridoxal phosphate)lysine mark.

This sequence belongs to the class-II pyridoxal-phosphate-dependent aminotransferase family. Histidinol-phosphate aminotransferase subfamily. As to quaternary structure, homodimer. It depends on pyridoxal 5'-phosphate as a cofactor.

It catalyses the reaction L-histidinol phosphate + 2-oxoglutarate = 3-(imidazol-4-yl)-2-oxopropyl phosphate + L-glutamate. The protein operates within amino-acid biosynthesis; L-histidine biosynthesis; L-histidine from 5-phospho-alpha-D-ribose 1-diphosphate: step 7/9. The sequence is that of Histidinol-phosphate aminotransferase from Escherichia coli O7:K1 (strain IAI39 / ExPEC).